A 216-amino-acid chain; its full sequence is Somatotropin (216 aa).

Positions 1 to 26 (MATDSRTSWLLTVSLLCLLWPQEASA) are cleaved as a signal peptide. His45 contacts Zn(2+). A disulfide bridge links Cys78 with Cys189. A Phosphoserine modification is found at Ser131. Glu198 is a binding site for Zn(2+). Cys206 and Cys214 are disulfide-bonded.

It belongs to the somatotropin/prolactin family.

The protein localises to the secreted. In terms of biological role, plays an important role in growth control. Its major role in stimulating body growth is to stimulate the liver and other tissues to secrete IGF1. It stimulates both the differentiation and proliferation of myoblasts. It also stimulates amino acid uptake and protein synthesis in muscle and other tissues. This chain is Somatotropin (Gh1), found in Mus musculus (Mouse).